A 64-amino-acid polypeptide reads, in one-letter code: Small ribosomal subunit protein bS21 (64 aa).

A disordered region spans residues Lys-42–Tyr-64. The segment covering Ala-50–Tyr-64 has biased composition (basic residues).

It belongs to the bacterial ribosomal protein bS21 family.

The chain is Small ribosomal subunit protein bS21 from Malacoplasma penetrans (strain HF-2) (Mycoplasma penetrans).